The chain runs to 566 residues: Arginine--tRNA ligase (566 aa).

The 'HIGH' region signature appears at 121 to 131 (ANPNGPFHIGH).

The protein belongs to the class-I aminoacyl-tRNA synthetase family.

It is found in the cytoplasm. It carries out the reaction tRNA(Arg) + L-arginine + ATP = L-arginyl-tRNA(Arg) + AMP + diphosphate. The protein is Arginine--tRNA ligase of Methanococcus maripaludis (strain C6 / ATCC BAA-1332).